A 217-amino-acid chain; its full sequence is Oxygen regulatory protein NreC (217 aa).

In terms of domain architecture, Response regulatory spans 2–119 (KIVIADDHAV…QLLLAVRTVY (118 aa)). Asp-53 is modified (4-aspartylphosphate). One can recognise an HTH luxR-type domain in the interval 148-213 (TNDPFKILSK…ELVEYALKKK (66 aa)). Positions 172–191 (NKDIAEKLFVSVKTVEAHKT) form a DNA-binding region, H-T-H motif.

In terms of processing, phosphorylated by NreB.

It localises to the cytoplasm. In terms of biological role, member of the two-component regulatory system NreB/NreC involved in the control of dissimilatory nitrate/nitrite reduction in response to oxygen. Phosphorylated NreC binds to a GC-rich palindromic sequence at the promoters of the nitrate (narGHJI) and nitrite (nir) reductase operons, as well as the putative nitrate transporter gene narT, and activates their expression. In Staphylococcus haemolyticus (strain JCSC1435), this protein is Oxygen regulatory protein NreC (nreC).